The chain runs to 331 residues: 6-phosphogluconolactonase (331 aa).

Lys287 carries the N6-acetyllysine modification.

This sequence belongs to the cycloisomerase 2 family.

The enzyme catalyses 6-phospho-D-glucono-1,5-lactone + H2O = 6-phospho-D-gluconate + H(+). It participates in carbohydrate degradation; pentose phosphate pathway; D-ribulose 5-phosphate from D-glucose 6-phosphate (oxidative stage): step 2/3. In terms of biological role, catalyzes the hydrolysis of 6-phosphogluconolactone to 6-phosphogluconate. In Shigella sonnei (strain Ss046), this protein is 6-phosphogluconolactonase.